We begin with the raw amino-acid sequence, 215 residues long: MLQVYLVRHGETQWNAERRIQGQSDSPLTEKGERQAMQVAQRAKALGITHIITSDLGRTQRTAEIIAQGCGCDVILDPRLRELDMGILERRHLDTLSEEEEGWRRQLVNGTPDGRIPQGESMQEVSERMHGALNACLDLPPGSRPLLVSHGMALGCLVSTILGLPAYAERRLRLRNCSISRVDYQQSPWLASGWVVETAGDVSHLDAPALDELQR.

Substrate is bound by residues 8–15 (RHGETQWN), 21–22 (QG), Arg-58, 82–85 (ELDM), 104–105 (RR), and 151–152 (GM). His-9 (tele-phosphohistidine intermediate) is an active-site residue. Glu-82 acts as the Proton donor/acceptor in catalysis.

Belongs to the phosphoglycerate mutase family. GpmB subfamily.

It carries out the reaction (2R)-2-phosphoglycerate = (2R)-3-phosphoglycerate. It participates in carbohydrate degradation; glycolysis; pyruvate from D-glyceraldehyde 3-phosphate: step 3/5. The protein is Probable phosphoglycerate mutase GpmB of Cronobacter sakazakii (strain ATCC BAA-894) (Enterobacter sakazakii).